The following is a 296-amino-acid chain: Acetylglutamate kinase (296 aa).

Residues 66–67 (GG), Arg-88, and Asn-191 each bind substrate.

The protein belongs to the acetylglutamate kinase family. ArgB subfamily.

Its subcellular location is the cytoplasm. The catalysed reaction is N-acetyl-L-glutamate + ATP = N-acetyl-L-glutamyl 5-phosphate + ADP. It participates in amino-acid biosynthesis; L-arginine biosynthesis; N(2)-acetyl-L-ornithine from L-glutamate: step 2/4. In terms of biological role, catalyzes the ATP-dependent phosphorylation of N-acetyl-L-glutamate. This chain is Acetylglutamate kinase, found in Lawsonia intracellularis (strain PHE/MN1-00).